A 116-amino-acid chain; its full sequence is Putative membrane protein (116 aa).

Residues 13–33 form a helical membrane-spanning segment; the sequence is VISIITFILVIAIFVIEIVSC.

It is found in the host membrane. The polypeptide is Putative membrane protein (Alethinophid 1 reptarenavirus (isolate AlRrV1/Boa/USA/BC/2009) (Golden Gate virus)).